Here is an 853-residue protein sequence, read N- to C-terminus: Penicillin-binding protein 1A (853 aa).

The Cytoplasmic portion of the chain corresponds to 1–6; the sequence is MRIAKL. A helical; Signal-anchor for type II membrane protein transmembrane segment spans residues 7–27; sequence ILNTLLTLCILGLVAGGMLYF. At 28–853 the chain is on the periplasmic side; the sequence is HLKSELQQPM…TPATQPQELF (826 aa). Residues 37–205 are transglycosylase; sequence MQIYTADGKL…STMNPLYSLK (169 aa). Catalysis depends on E75, which acts as the Proton donor; for transglycosylase activity. Residues 387 to 681 form a transpeptidase region; sequence QRANGEWQLG…RVISGELAFL (295 aa). The active-site Acyl-ester intermediate; for transpeptidase activity is the S441. Residues 615–636 form a disordered region; it reads NALKPTDDSTNGEELDQQPETV.

The protein in the N-terminal section; belongs to the glycosyltransferase 51 family. This sequence in the C-terminal section; belongs to the transpeptidase family.

It is found in the cell inner membrane. It carries out the reaction [GlcNAc-(1-&gt;4)-Mur2Ac(oyl-L-Ala-gamma-D-Glu-L-Lys-D-Ala-D-Ala)](n)-di-trans,octa-cis-undecaprenyl diphosphate + beta-D-GlcNAc-(1-&gt;4)-Mur2Ac(oyl-L-Ala-gamma-D-Glu-L-Lys-D-Ala-D-Ala)-di-trans,octa-cis-undecaprenyl diphosphate = [GlcNAc-(1-&gt;4)-Mur2Ac(oyl-L-Ala-gamma-D-Glu-L-Lys-D-Ala-D-Ala)](n+1)-di-trans,octa-cis-undecaprenyl diphosphate + di-trans,octa-cis-undecaprenyl diphosphate + H(+). It catalyses the reaction Preferential cleavage: (Ac)2-L-Lys-D-Ala-|-D-Ala. Also transpeptidation of peptidyl-alanyl moieties that are N-acyl substituents of D-alanine.. Its pathway is cell wall biogenesis; peptidoglycan biosynthesis. Cell wall formation. Synthesis of cross-linked peptidoglycan from the lipid intermediates. The enzyme has a penicillin-insensitive transglycosylase N-terminal domain (formation of linear glycan strands) and a penicillin-sensitive transpeptidase C-terminal domain (cross-linking of the peptide subunits). This chain is Penicillin-binding protein 1A (mrcA), found in Haemophilus influenzae (strain ATCC 51907 / DSM 11121 / KW20 / Rd).